A 250-amino-acid polypeptide reads, in one-letter code: 5'-nucleotidase SurE (250 aa).

4 residues coordinate a divalent metal cation: Asp-8, Asp-9, Ser-40, and Asn-92.

Belongs to the SurE nucleotidase family. A divalent metal cation is required as a cofactor.

It is found in the cytoplasm. It catalyses the reaction a ribonucleoside 5'-phosphate + H2O = a ribonucleoside + phosphate. Its function is as follows. Nucleotidase that shows phosphatase activity on nucleoside 5'-monophosphates. The protein is 5'-nucleotidase SurE of Dichelobacter nodosus (strain VCS1703A).